A 208-amino-acid polypeptide reads, in one-letter code: MQKTELDDQKLVEEIARRIREILELLGENPEREGLKETPERVAKALLEMTSGLRTPPPQIKVFSLGEDGEVYEKNQIVLIKDVNFSSLCEHHMLPIIGKIHVAYIVSNSGKVAGFSKIIRIVNYYSSRLQIQERLVEQIADAIMNSEIKPKGVMVIGNAIHMCSYVRGVKDKEAKLVSVAYRGLFKTNRALQNHVFRLLDNANKVNLL.

Zn(2+) contacts are provided by Cys89, His92, and Cys163.

The protein belongs to the GTP cyclohydrolase I family. Homomer.

It carries out the reaction GTP + H2O = 7,8-dihydroneopterin 3'-triphosphate + formate + H(+). The protein operates within cofactor biosynthesis; 7,8-dihydroneopterin triphosphate biosynthesis; 7,8-dihydroneopterin triphosphate from GTP: step 1/1. This Saccharolobus islandicus (strain L.S.2.15 / Lassen #1) (Sulfolobus islandicus) protein is GTP cyclohydrolase 1.